Here is a 296-residue protein sequence, read N- to C-terminus: Diaminopimelate epimerase (296 aa).

Residues N17, Q49, and N69 each contribute to the substrate site. C78 serves as the catalytic Proton donor. Residues 79-80 (GN), N171, N205, and 223-224 (ER) contribute to the substrate site. C232 serves as the catalytic Proton acceptor. A substrate-binding site is contributed by 233-234 (GT).

The protein belongs to the diaminopimelate epimerase family. As to quaternary structure, homodimer.

It is found in the cytoplasm. It carries out the reaction (2S,6S)-2,6-diaminopimelate = meso-2,6-diaminopimelate. It participates in amino-acid biosynthesis; L-lysine biosynthesis via DAP pathway; DL-2,6-diaminopimelate from LL-2,6-diaminopimelate: step 1/1. Functionally, catalyzes the stereoinversion of LL-2,6-diaminopimelate (L,L-DAP) to meso-diaminopimelate (meso-DAP), a precursor of L-lysine and an essential component of the bacterial peptidoglycan. The polypeptide is Diaminopimelate epimerase (Methylorubrum populi (strain ATCC BAA-705 / NCIMB 13946 / BJ001) (Methylobacterium populi)).